The following is a 242-amino-acid chain: Ribosomal RNA small subunit methyltransferase G (242 aa).

Residues Gly79, 130 to 131 (VE), and Gln149 contribute to the S-adenosyl-L-methionine site.

Belongs to the methyltransferase superfamily. RNA methyltransferase RsmG family.

The protein localises to the cytoplasm. In terms of biological role, specifically methylates the N7 position of a guanine in 16S rRNA. This Mycoplasmoides gallisepticum (strain R(low / passage 15 / clone 2)) (Mycoplasma gallisepticum) protein is Ribosomal RNA small subunit methyltransferase G.